The chain runs to 96 residues: Transcription and mRNA export factor SUS1 (96 aa).

Lysine 68 is covalently cross-linked (Glycyl lysine isopeptide (Lys-Gly) (interchain with G-Cter in ubiquitin)).

Belongs to the ENY2 family. In terms of assembly, component of the nuclear pore complex (NPC)-associated TREX-2 complex (transcription and export complex 2), composed of at least SUS1, SAC3, THP1, SEM1, and CDC31. TREX-2 contains 2 SUS1 chains. The TREX-2 complex interacts with the nucleoporin NUP1. Component of the 1.8 MDa SAGA transcription coactivator-HAT complex. SAGA is built of 5 distinct domains with specialized functions. Within the SAGA complex, SUS1, SGF11, SGF73 and UBP8 form an additional subcomplex of SAGA called the DUB module (deubiquitination module). Interacts directly with THP1, SAC3, SGF11, and with the RNA polymerase II.

Its subcellular location is the nucleus. It localises to the nucleoplasm. The protein resides in the cytoplasm. It is found in the P-body. In terms of biological role, involved in mRNA export coupled transcription activation by association with both the TREX-2 and the SAGA complexes. At the promoters, SAGA is required for recruitment of the basal transcription machinery. It influences RNA polymerase II transcriptional activity through different activities such as TBP interaction and promoter selectivity, interaction with transcription activators, and chromatin modification through histone acetylation and deubiquitination. Within the SAGA complex, participates in a subcomplex required for deubiquitination of H2B and for the maintenance of steady-state H3 methylation levels. The TREX-2 complex functions in docking export-competent ribonucleoprotein particles (mRNPs) to the nuclear entrance of the nuclear pore complex (nuclear basket). TREX-2 participates in mRNA export and accurate chromatin positioning in the nucleus by tethering genes to the nuclear periphery. May also be involved in cytoplasmic mRNA decay by interaction with components of P-bodies. In Saccharomyces cerevisiae (strain YJM789) (Baker's yeast), this protein is Transcription and mRNA export factor SUS1.